The primary structure comprises 351 residues: Probable cell division control protein 7 homolog 1 (351 aa).

The Protein kinase domain occupies 21–341 (YTPIEKIGEG…ASDALSHPFF (321 aa)). Residues 27-35 (IGEGSFSVV) and Lys-50 contribute to the ATP site. Catalysis depends on Asp-137, which acts as the Proton acceptor.

This sequence belongs to the protein kinase superfamily. Ser/Thr protein kinase family. CDC7 subfamily. It depends on Mg(2+) as a cofactor.

It catalyses the reaction L-seryl-[protein] + ATP = O-phospho-L-seryl-[protein] + ADP + H(+). The catalysed reaction is L-threonyl-[protein] + ATP = O-phospho-L-threonyl-[protein] + ADP + H(+). Its function is as follows. Serine/threonine-protein kinase. Needed for the initiation of DNA synthesis during mitosis as well as for synaptonemal complex formation and commitment to recombination during meiosis. The protein is Probable cell division control protein 7 homolog 1 (CDC7-1) of Encephalitozoon cuniculi (strain GB-M1) (Microsporidian parasite).